The following is a 529-amino-acid chain: Phospholipase A1-Igamma2, chloroplastic (529 aa).

The transit peptide at 1–43 directs the protein to the chloroplast; it reads MAAIPSHNNLLTINHKNSITGSSSLNTNFSEINFPAKFRVATR. Residues 316–320 carry the GXSXG motif; that stretch reads GHSLG. The Acyl-ester intermediate role is filled by Ser318. Residues Asp381 and His437 each act as charge relay system in the active site.

This sequence belongs to the AB hydrolase superfamily. Lipase family. Interacts with SBP1. In terms of tissue distribution, widely expressed. Highly expressed in leaves and stems.

The protein resides in the plastid. Its subcellular location is the chloroplast. It carries out the reaction 1,2-dihexadecanoyl-sn-glycero-3-phosphocholine + H2O = 2-hexadecanoyl-sn-glycero-3-phosphocholine + hexadecanoate + H(+). The enzyme catalyses a 1,2-diacyl-3-O-(beta-D-galactosyl)-sn-glycerol + H2O = an acyl-3-O-(beta-D-galactosyl)-sn-glycerol + a fatty acid + H(+). The catalysed reaction is a 1,2-diacyl-3-O-[alpha-D-galactosyl-(1-&gt;6)-beta-D-galactosyl]-sn-glycerol + H2O = acyl-3-O-[alpha-D-galactosyl-(1-&gt;6)-beta-D-galactosyl]-sn-glycerol + a fatty acid + H(+). It catalyses the reaction a triacylglycerol + H2O = a diacylglycerol + a fatty acid + H(+). Functionally, acylhydrolase with broad specificity. Catalyzes the hydrolysis of phosphatidylcholine at the sn-1 position. Possesses moderate activity toward phosphatidylcholine (PC), monogalactosyldiacylglycerol (MGDG), digalactosyldiacylglycerol (DGDG) and triacylglycerol (TAG). The protein is Phospholipase A1-Igamma2, chloroplastic of Arabidopsis thaliana (Mouse-ear cress).